The following is a 742-amino-acid chain: Alginate lyase (742 aa).

A signal peptide spans Met-1–Ala-26. Substrate-binding positions include Arg-143, Gln-153–Asn-156, Gln-204, His-208, and Tyr-263–Arg-266. Catalysis depends on Tyr-264, which acts as the Proton donor. Catalysis depends on His-418, which acts as the Proton acceptor. Residues His-420 and Asp-438 each contribute to the Zn(2+) site. A substrate-binding site is contributed by Arg-443. His-469 contributes to the Zn(2+) binding site. A substrate-binding site is contributed by Glu-669.

This sequence belongs to the polysaccharide lyase 17 family. In terms of assembly, homodimer. Zn(2+) serves as cofactor.

The protein resides in the periplasm. It carries out the reaction Cleavage of 4-deoxy-alpha-L-erythro-hex-4-enopyranuronoside oligosaccharides into 4-deoxy-alpha-L-erythro-hex-4-enopyranuronate monosaccharides.. Polysaccharide lyase that catalyzes the depolymerization of alginate via a beta-elimination mechanism, cleaving the beta-1,4 glycosidic bond between two adjacent sugar residues. Acts specifically on alginate and each of its block structures, with highest activity toward poly-beta-D-mannuronate (poly-ManA). Shows an exolytic mode of action, producing unsaturated monomers. Displays a very low activity against poly-beta-D-glucuronate (poly-GlcA), and is not active on poly-alpha-D-galacturonate, hyaluronan, heparin, heparan sulfate and chondroitin sulfate. The sequence is that of Alginate lyase from Stenotrophomonas maltophilia (strain K279a).